The chain runs to 469 residues: Mitochondrial adenyl nucleotide antiporter SLC25A25 (469 aa).

The interval 1 to 165 is regulatory N-terminal domain; the sequence is MLCLCLYVPI…LYWKHSTIFD (165 aa). Residues 1–189 lie on the Mitochondrial intermembrane side of the membrane; the sequence is MLCLCLYVPI…ERQTGMWWRH (189 aa). 3 consecutive EF-hand domains span residues 47–80, 78–113, and 114–149; these read TYRQWKQKIVQAGDKDLDGQLDFEEFVHYLQDHE, DHEKKLRLVFKSLDKKNDGRIDAQEIMQSLRDLGVK, and ISEQQAEKILKSMDKNGTMTIDWNEWRDYHLLHPVE. Ca(2+) is bound by residues aspartate 60, aspartate 62, aspartate 64, glutamine 66, and glutamate 71. Residues 151–160 form a linker region region; the sequence is IPEIILYWKH. The segment at 166–469 is C-terminal transmembrane transporter domain; sequence VGENLTVPDE…LKITLGVQSR (304 aa). Solcar repeat units lie at residues 184 to 270, 278 to 363, and 375 to 463; these read GMWW…MKRL, LRIH…LKNT, and PGVF…LKIT. The chain crosses the membrane as a helical span at residues 190–207; that stretch reads LVAGGGAGAVSRTCTAPL. Topologically, residues 208–244 are mitochondrial matrix; it reads DRLKVLMQVHASRSNNMCIVGGFTQMIREGGAKSLWR. Residues 245–264 form a helical membrane-spanning segment; the sequence is GNGINVLKIAPESAIKFMAY. The Mitochondrial intermembrane portion of the chain corresponds to 265–287; it reads EQMKRLVGSDQETLRIHERLVAG. Residues 288–301 traverse the membrane as a helical segment; it reads SLAGAIAQSSIYPM. Over 302–337 the chain is Mitochondrial matrix; it reads EVLKTRMALRKTGQYSGMLDCARRILAKEGVAAFYK. The chain crosses the membrane as a helical span at residues 338-357; sequence GYIPNMLGIIPYAGIDLAVY. The Mitochondrial intermembrane portion of the chain corresponds to 358–380; sequence ETLKNTWLQRYAVNSADPGVFVL. Residues 381-398 form a helical membrane-spanning segment; the sequence is LACGTISSTCGQLASYPL. At 399-437 the chain is on the mitochondrial matrix side; sequence ALVRTRMQAQASIEGAPEVTMSSLFKQILRTEGAFGLYR. The helical transmembrane segment at 438 to 457 threads the bilayer; the sequence is GLAPNFMKVIPAVSISYVVY. Topologically, residues 458–469 are mitochondrial intermembrane; that stretch reads ENLKITLGVQSR.

The protein belongs to the mitochondrial carrier (TC 2.A.29) family.

It localises to the mitochondrion inner membrane. It carries out the reaction Mg(2+)(out) + phosphate(in) + ATP(out) = Mg(2+)(in) + phosphate(out) + ATP(in). Its activity is regulated as follows. Activated by an increase in cytosolic calcium levels that induce a conformational change of the N-terminal regulatory domain, uncapping the channel and allowing transport. Functionally, electroneutral antiporter that most probably mediates the transport of adenyl nucleotides through the inner mitochondrial membrane. Originally identified as an ATP-magnesium/inorganic phosphate antiporter, it could have a broader specificity for adenyl nucleotides. By regulating the mitochondrial matrix adenyl nucleotide pool could adapt to changing cellular energetic demands and indirectly regulate adenyl nucleotide-dependent metabolic pathways. The chain is Mitochondrial adenyl nucleotide antiporter SLC25A25 from Mus musculus (Mouse).